Consider the following 308-residue polypeptide: tRNA dimethylallyltransferase (308 aa).

19–26 serves as a coordination point for ATP; that stretch reads GPTASGKS. A substrate-binding site is contributed by 21 to 26; that stretch reads TASGKS. The interaction with substrate tRNA stretch occupies residues 44-47; sequence DSMQ.

Belongs to the IPP transferase family. Monomer. It depends on Mg(2+) as a cofactor.

The catalysed reaction is adenosine(37) in tRNA + dimethylallyl diphosphate = N(6)-dimethylallyladenosine(37) in tRNA + diphosphate. Its function is as follows. Catalyzes the transfer of a dimethylallyl group onto the adenine at position 37 in tRNAs that read codons beginning with uridine, leading to the formation of N6-(dimethylallyl)adenosine (i(6)A). The polypeptide is tRNA dimethylallyltransferase (Methylobacterium radiotolerans (strain ATCC 27329 / DSM 1819 / JCM 2831 / NBRC 15690 / NCIMB 10815 / 0-1)).